A 327-amino-acid polypeptide reads, in one-letter code: Annexin A8 (327 aa).

Annexin repeat units follow at residues F21–Y92, P93–Q164, G177–K249, and N253–G324. Residues M266, G268, G270, and D310 each contribute to the Ca(2+) site.

It belongs to the annexin family.

Its function is as follows. This protein is an anticoagulant protein that acts as an indirect inhibitor of the thromboplastin-specific complex, which is involved in the blood coagulation cascade. This is Annexin A8 (ANXA8) from Pan troglodytes (Chimpanzee).